A 381-amino-acid chain; its full sequence is 4-hydroxyphenylpyruvate dioxygenase (381 aa).

2 consecutive VOC domains span residues 22–156 (GMDA…LVDR) and 184–338 (AIDH…IFTK). Fe cation contacts are provided by H187, H270, and E349.

This sequence belongs to the 4HPPD family. As to quaternary structure, homodimer. Requires Fe cation as cofactor.

The enzyme catalyses 3-(4-hydroxyphenyl)pyruvate + O2 = homogentisate + CO2. It functions in the pathway amino-acid degradation; L-phenylalanine degradation; acetoacetate and fumarate from L-phenylalanine: step 3/6. This is 4-hydroxyphenylpyruvate dioxygenase (hpd) from Streptomyces avermitilis (strain ATCC 31267 / DSM 46492 / JCM 5070 / NBRC 14893 / NCIMB 12804 / NRRL 8165 / MA-4680).